The chain runs to 529 residues: Keratin, type II cytoskeletal 74 (529 aa).

The head stretch occupies residues 1–139 (MSRQLNIKSS…DPEIQKVRAQ (139 aa)). The interval 140 to 175 (EREQIKVLNDKFASFIDKVRFLEQQNQVLETKWELL) is coil 1A. The region spanning 140 to 453 (EREQIKVLND…KLLEGEECRM (314 aa)) is the IF rod domain. The interval 176–194 (QQLDLNNCKKNLEPILEGY) is linker 1. Residues 195-286 (ISNLRKQLET…CLYDAEIAQI (92 aa)) are coil 1B. Residues 287–310 (QTHASETSVILSMDNNRDLDLDSI) are linker 12. A coil 2 region spans residues 311 to 449 (IAEVRMHYEE…ATYRKLLEGE (139 aa)). The tail stretch occupies residues 450–529 (ECRMSGENPS…ASIPARKATR (80 aa)). The span at 484-500 (GASAVAGSSGSTQSGQT) shows a compositional bias: low complexity. Residues 484–529 (GASAVAGSSGSTQSGQTKTTEARGGDLKDTQGKSTPASIPARKATR) are disordered. Positions 503–514 (TEARGGDLKDTQ) are enriched in basic and acidic residues. The residue at position 513 (threonine 513) is a Phosphothreonine.

The protein belongs to the intermediate filament family. Heterotetramer of two type I and two type II keratins. In terms of tissue distribution, highly expressed in hair follicles from scalp. In hair, it is specifically present in the inner root sheath (IRS) of the hair follicle. Present in the IRS Huxley layer, but not in Henle layer or cuticle of the IRS. In the IRS Huxley layer, it is expressed in specialized Huxley cells, termed 'Fluegelzellen, along the area of differentiated Henle cells (at protein level).

Its function is as follows. Has a role in hair formation. Specific component of keratin intermediate filaments in the inner root sheath (IRS) of the hair follicle. The protein is Keratin, type II cytoskeletal 74 (KRT74) of Homo sapiens (Human).